A 308-amino-acid polypeptide reads, in one-letter code: UDP-N-acetylenolpyruvoylglucosamine reductase 2 (308 aa).

Residues 31 to 197 (RIGGPADYLV…AEVVMALRPA (167 aa)) enclose the FAD-binding PCMH-type domain. Residue Arg176 is part of the active site. Ser226 functions as the Proton donor in the catalytic mechanism. Glu296 is an active-site residue.

It belongs to the MurB family. FAD is required as a cofactor.

The protein localises to the cytoplasm. The catalysed reaction is UDP-N-acetyl-alpha-D-muramate + NADP(+) = UDP-N-acetyl-3-O-(1-carboxyvinyl)-alpha-D-glucosamine + NADPH + H(+). It participates in cell wall biogenesis; peptidoglycan biosynthesis. Functionally, cell wall formation. This Symbiobacterium thermophilum (strain DSM 24528 / JCM 14929 / IAM 14863 / T) protein is UDP-N-acetylenolpyruvoylglucosamine reductase 2.